We begin with the raw amino-acid sequence, 588 residues long: Aspartate--tRNA ligase (588 aa).

Glu-174 provides a ligand contact to L-aspartate. The aspartate stretch occupies residues 198–201 (QLFK). Position 220 (Arg-220) interacts with L-aspartate. ATP is bound by residues 220 to 222 (RDE) and Gln-229. Residue His-448 coordinates L-aspartate. Position 482 (Glu-482) interacts with ATP. Arg-489 provides a ligand contact to L-aspartate. 534-537 (GIDR) serves as a coordination point for ATP.

It belongs to the class-II aminoacyl-tRNA synthetase family. Type 1 subfamily. In terms of assembly, homodimer.

Its subcellular location is the cytoplasm. The enzyme catalyses tRNA(Asp) + L-aspartate + ATP = L-aspartyl-tRNA(Asp) + AMP + diphosphate. Its function is as follows. Catalyzes the attachment of L-aspartate to tRNA(Asp) in a two-step reaction: L-aspartate is first activated by ATP to form Asp-AMP and then transferred to the acceptor end of tRNA(Asp). The protein is Aspartate--tRNA ligase of Xanthomonas oryzae pv. oryzae (strain PXO99A).